The sequence spans 126 residues: Protein LiaI (126 aa).

A run of 2 helical transmembrane segments spans residues 11 to 31 (FLLI…GFII) and 56 to 76 (IIVG…VVGI).

Its subcellular location is the cell membrane. The protein is Protein LiaI (liaI) of Bacillus subtilis (strain 168).